The following is an 883-amino-acid chain: Serine/threonine-protein phosphatase BSL1 homolog (883 aa).

Kelch repeat units lie at residues 64–113 (ASSG…AVGT), 221–271 (MLLL…VFVG), 273–323 (RLHV…DHDA), and 341–387 (QIYI…NRNH). Disordered regions lie at residues 381 to 402 (ENQN…STDK), 430 to 466 (SHAS…SLEP), and 499 to 525 (NESR…QRSP). Residues 385–399 (RNHNFNSDSPTTNNS) are compositionally biased toward polar residues. Mn(2+) contacts are provided by Asp-586, His-588, Asp-620, and Asn-652. His-653 serves as the catalytic Proton donor. Mn(2+) is bound by residues His-705 and His-784. Residues 861-883 (QRPPTPTRGRPQSASDRNSLAYI) are disordered. A compositionally biased stretch (polar residues) spans 872–883 (QSASDRNSLAYI).

Belongs to the PPP phosphatase family. BSU subfamily. Interacts with the phosphorylated form of BSK3. Requires Mn(2+) as cofactor.

The protein resides in the nucleus. It carries out the reaction O-phospho-L-seryl-[protein] + H2O = L-seryl-[protein] + phosphate. The catalysed reaction is O-phospho-L-threonyl-[protein] + H2O = L-threonyl-[protein] + phosphate. The polypeptide is Serine/threonine-protein phosphatase BSL1 homolog (BSL1) (Oryza sativa subsp. japonica (Rice)).